The primary structure comprises 156 residues: ATP synthase subunit b (156 aa).

The chain crosses the membrane as a helical span at residues 12-32 (VAFFIFVLFCMKFVWPPVIAA).

This sequence belongs to the ATPase B chain family. As to quaternary structure, F-type ATPases have 2 components, F(1) - the catalytic core - and F(0) - the membrane proton channel. F(1) has five subunits: alpha(3), beta(3), gamma(1), delta(1), epsilon(1). F(0) has three main subunits: a(1), b(2) and c(10-14). The alpha and beta chains form an alternating ring which encloses part of the gamma chain. F(1) is attached to F(0) by a central stalk formed by the gamma and epsilon chains, while a peripheral stalk is formed by the delta and b chains.

It localises to the cell inner membrane. In terms of biological role, f(1)F(0) ATP synthase produces ATP from ADP in the presence of a proton or sodium gradient. F-type ATPases consist of two structural domains, F(1) containing the extramembraneous catalytic core and F(0) containing the membrane proton channel, linked together by a central stalk and a peripheral stalk. During catalysis, ATP synthesis in the catalytic domain of F(1) is coupled via a rotary mechanism of the central stalk subunits to proton translocation. Functionally, component of the F(0) channel, it forms part of the peripheral stalk, linking F(1) to F(0). The protein is ATP synthase subunit b of Pseudomonas syringae pv. syringae (strain B728a).